Here is a 293-residue protein sequence, read N- to C-terminus: MTDSTRSLRNCLAPAKLNLFLHITGRRPNGYHDLQSVFQLLNWGDTLHFTLRDDGKVARATDVPGVPEQSDLVVRAANLLKAHTGTAAGVDIEIDKCLPMGAGLGGGSSDAATTLLALNRLWQLDLPRAELQSLAVKLGADVPFFVFGKNAFAEGIGEELAEVELPTRWFLVVTPRVHVPTAEIFSDELLTRDSKPVTITDFLAQQSSDARWPDSFGRNDMQQVVTSKYAEVAQVVKWLYNVAPARMTGSGASVFAAFQSKQQAEAAKAQLPAGWNGAVAESLNEHPLFAFAS.

Lysine 16 is a catalytic residue. 99-109 (PMGAGLGGGSS) contributes to the ATP binding site. Aspartate 141 is an active-site residue.

Belongs to the GHMP kinase family. IspE subfamily.

It carries out the reaction 4-CDP-2-C-methyl-D-erythritol + ATP = 4-CDP-2-C-methyl-D-erythritol 2-phosphate + ADP + H(+). It participates in isoprenoid biosynthesis; isopentenyl diphosphate biosynthesis via DXP pathway; isopentenyl diphosphate from 1-deoxy-D-xylulose 5-phosphate: step 3/6. Functionally, catalyzes the phosphorylation of the position 2 hydroxy group of 4-diphosphocytidyl-2C-methyl-D-erythritol. The polypeptide is 4-diphosphocytidyl-2-C-methyl-D-erythritol kinase (Burkholderia multivorans (strain ATCC 17616 / 249)).